We begin with the raw amino-acid sequence, 263 residues long: Endonuclease NucS (263 aa).

Belongs to the NucS endonuclease family.

Its subcellular location is the cytoplasm. Its function is as follows. Cleaves both 3' and 5' ssDNA extremities of branched DNA structures. The protein is Endonuclease NucS of Methanocaldococcus jannaschii (strain ATCC 43067 / DSM 2661 / JAL-1 / JCM 10045 / NBRC 100440) (Methanococcus jannaschii).